The sequence spans 772 residues: Mitochondrial intermediate peptidase (772 aa).

Residues 1 to 33 (MLARPSTTVLARRPFFRFRGCLNEPRPTKARCL) constitute a mitochondrion transit peptide. Position 556 (His556) interacts with Zn(2+). Residue Glu557 is part of the active site. Zn(2+) is bound by residues His560 and His563.

The protein belongs to the peptidase M3 family. Zn(2+) serves as cofactor.

The protein resides in the mitochondrion matrix. The catalysed reaction is Release of an N-terminal octapeptide as second stage of processing of some proteins imported into the mitochondrion.. Functionally, cleaves proteins, imported into the mitochondrion, to their mature size. While most mitochondrial precursor proteins are processed to the mature form in one step by mitochondrial processing peptidase (MPP), the sequential cleavage by MIP of an octapeptide after initial processing by MPP is a required step for a subgroup of nuclear-encoded precursor proteins destined for the matrix or the inner membrane. The protein is Mitochondrial intermediate peptidase (OCT1) of Coprinopsis scobicola (Ink cap fungus).